The following is a 163-amino-acid chain: Nucleotide-binding protein DvMF_3058 (163 aa).

It belongs to the YajQ family.

Its function is as follows. Nucleotide-binding protein. This chain is Nucleotide-binding protein DvMF_3058, found in Nitratidesulfovibrio vulgaris (strain DSM 19637 / Miyazaki F) (Desulfovibrio vulgaris).